Here is a 286-residue protein sequence, read N- to C-terminus: ATP synthase gamma chain (286 aa).

The protein belongs to the ATPase gamma chain family. In terms of assembly, F-type ATPases have 2 components, CF(1) - the catalytic core - and CF(0) - the membrane proton channel. CF(1) has five subunits: alpha(3), beta(3), gamma(1), delta(1), epsilon(1). CF(0) has three main subunits: a, b and c.

The protein resides in the cell inner membrane. Functionally, produces ATP from ADP in the presence of a proton gradient across the membrane. The gamma chain is believed to be important in regulating ATPase activity and the flow of protons through the CF(0) complex. This chain is ATP synthase gamma chain, found in Pseudomonas savastanoi pv. phaseolicola (strain 1448A / Race 6) (Pseudomonas syringae pv. phaseolicola (strain 1448A / Race 6)).